The sequence spans 91 residues: Cell division topological specificity factor (91 aa).

This sequence belongs to the MinE family.

Functionally, prevents the cell division inhibition by proteins MinC and MinD at internal division sites while permitting inhibition at polar sites. This ensures cell division at the proper site by restricting the formation of a division septum at the midpoint of the long axis of the cell. The chain is Cell division topological specificity factor from Wigglesworthia glossinidia brevipalpis.